The following is a 76-amino-acid chain: Conotoxin Vc6.3 (76 aa).

An N-terminal signal peptide occupies residues 1 to 22 (MKLTCVMIVAVLFLTANTFATA). The propeptide occupies 23 to 50 (DDPRNGLRDLFSIAHHEMKNPEASKLNE). 3 disulfide bridges follow: Cys-52-Cys-66, Cys-59-Cys-70, and Cys-67-Cys-75.

This sequence belongs to the conotoxin O1 superfamily. In terms of tissue distribution, expressed by the venom duct.

It localises to the secreted. The protein is Conotoxin Vc6.3 of Conus victoriae (Queen Victoria cone).